The chain runs to 298 residues: Beta-soluble NSF attachment protein (298 aa).

The protein belongs to the SNAP family. In terms of assembly, interacts with PRKCABP, and disrupts the interaction between GRIA2 and PRKCABP, leading to the internalization of GRIA2. In terms of tissue distribution, brain.

Its subcellular location is the membrane. In terms of biological role, required for vesicular transport between the endoplasmic reticulum and the Golgi apparatus. The protein is Beta-soluble NSF attachment protein (NAPB) of Bos taurus (Bovine).